The chain runs to 93 residues: Putative pterin-4-alpha-carbinolamine dehydratase (93 aa).

The protein belongs to the pterin-4-alpha-carbinolamine dehydratase family.

The enzyme catalyses (4aS,6R)-4a-hydroxy-L-erythro-5,6,7,8-tetrahydrobiopterin = (6R)-L-erythro-6,7-dihydrobiopterin + H2O. The protein is Putative pterin-4-alpha-carbinolamine dehydratase of Mycolicibacterium vanbaalenii (strain DSM 7251 / JCM 13017 / BCRC 16820 / KCTC 9966 / NRRL B-24157 / PYR-1) (Mycobacterium vanbaalenii).